Consider the following 656-residue polypeptide: Probable serine/threonine-protein kinase sky1 (656 aa).

The segment at 1–127 (MSDIQQDSTS…KQGGYHPVRR (127 aa)) is disordered. The segment covering 16–48 (TSLGGTSLGGTSLGGTSLGGTSLGGTSLGGTSL) has biased composition (gly residues). 2 stretches are compositionally biased toward low complexity: residues 49-64 (GGST…STNS) and 72-89 (TSSN…NNNE). Residues 96 to 108 (AGSSNKSFMPLNN) show a composition bias toward polar residues. The region spanning 135–648 (YQVVDKLGWG…AKDCLNHTWL (514 aa)) is the Protein kinase domain. ATP is bound at residue 141 to 149 (LGWGHFSTV). The interval 157–185 (TPITTSSSSSSTTTTTTSSSSNGNGNGNG) is disordered. Low complexity predominate over residues 160–179 (TTSSSSSSTTTTTTSSSSNG). Lys197 is an ATP binding site. The Proton acceptor role is filled by Asp298. Residues 330 to 454 (RTSSSNKQSQ…TTATATATTT (125 aa)) form a disordered region. The segment covering 332-355 (SSSNKQSQQQQQPQQQQSQQNIND) has biased composition (low complexity). Composition is skewed to basic and acidic residues over residues 383-401 (SNRD…DDNK) and 413-440 (ENTD…KEEP). The segment covering 441–454 (TTTTTTATATATTT) has biased composition (low complexity).

The protein belongs to the protein kinase superfamily. CMGC Ser/Thr protein kinase family.

It carries out the reaction L-seryl-[protein] + ATP = O-phospho-L-seryl-[protein] + ADP + H(+). The catalysed reaction is L-threonyl-[protein] + ATP = O-phospho-L-threonyl-[protein] + ADP + H(+). This is Probable serine/threonine-protein kinase sky1 (sky1) from Dictyostelium discoideum (Social amoeba).